The sequence spans 285 residues: 2-dehydro-3-deoxyphosphooctonate aldolase (285 aa).

This sequence belongs to the KdsA family.

The protein localises to the cytoplasm. The catalysed reaction is D-arabinose 5-phosphate + phosphoenolpyruvate + H2O = 3-deoxy-alpha-D-manno-2-octulosonate-8-phosphate + phosphate. It functions in the pathway carbohydrate biosynthesis; 3-deoxy-D-manno-octulosonate biosynthesis; 3-deoxy-D-manno-octulosonate from D-ribulose 5-phosphate: step 2/3. It participates in bacterial outer membrane biogenesis; lipopolysaccharide biosynthesis. This Acinetobacter baumannii (strain SDF) protein is 2-dehydro-3-deoxyphosphooctonate aldolase.